Here is a 320-residue protein sequence, read N- to C-terminus: Malate dehydrogenase (320 aa).

Residues 8–13 (GAGQIG) and D33 contribute to the NAD(+) site. Substrate contacts are provided by R82 and R88. NAD(+) contacts are provided by residues N95 and 118–120 (ITN). N120 and R151 together coordinate substrate. H175 functions as the Proton acceptor in the catalytic mechanism.

The protein belongs to the LDH/MDH superfamily. MDH type 3 family.

It carries out the reaction (S)-malate + NAD(+) = oxaloacetate + NADH + H(+). Catalyzes the reversible oxidation of malate to oxaloacetate. The protein is Malate dehydrogenase of Pelagibacter ubique (strain HTCC1062).